A 420-amino-acid polypeptide reads, in one-letter code: Serine protease inhibitor A3B (420 aa).

Positions Met-1–Ala-17 are cleaved as a signal peptide. 2 N-linked (GlcNAc...) asparagine glycosylation sites follow: Asn-104 and Asn-349. The interval Gly-367 to Phe-392 is RCL.

The protein belongs to the serpin family.

The protein localises to the secreted. This is Serine protease inhibitor A3B (Serpina3b) from Mus musculus (Mouse).